The primary structure comprises 389 residues: Serpin B13 (389 aa).

Belongs to the serpin family. Ov-serpin subfamily.

The protein localises to the cytoplasm. Its function is as follows. May play a role in the proliferation or differentiation of keratinocytes. The chain is Serpin B13 (Serpinb13) from Mus musculus (Mouse).